The following is a 493-amino-acid chain: Lysostaphin (493 aa).

An N-terminal signal peptide occupies residues 1–23 (MKKTKNNYYTRPLAIGLSTFALA). The propeptide occupies 24–247 (SIVYGGIQNE…ALVQNRTALR (224 aa)). 14 consecutive repeat copies span residues 49–61 (AEVE…VENT), 62–74 (AEVE…VENT), 75–87 (AEVE…VENT), 88–100 (AEVE…VENT), 101–113 (AEVE…VENT), 114–126 (AEVE…VENT), 127–139 (AEVE…VENT), 140–152 (AEVE…VENT), 153–165 (AEVE…VENT), 166–178 (AEVE…VENT), 179–191 (AEVE…VENT), 192–204 (AEVE…VENT), 205–217 (AEVE…VENT), and 218–230 (AEVE…VENT). The 15 X 13 AA approximate tandem repeats of A-E-V-E-T-S-K-A-P-V-E-N-T stretch occupies residues 49–243 (AEVETSKAPV…ETSKALVQNR (195 aa)). Residues 52–232 (ETSKAPVENT…SKAPVENTAE (181 aa)) form a disordered region. The 15; approximate repeat unit spans residues 231–243 (AEVETSKALVQNR). Residues histidine 279 and aspartate 283 each contribute to the Zn(2+) site. The active site involves histidine 360. Histidine 362 lines the Zn(2+) pocket. The SH3b domain maps to 413 to 481 (SESASFTPNT…YLPVRTWNKS (69 aa)).

Belongs to the peptidase M23B family. As to quaternary structure, monomer. Zn(2+) is required as a cofactor.

The protein localises to the secreted. It carries out the reaction Hydrolysis of the -Gly-|-Gly- bond in the pentaglycine inter-peptide link joining staphylococcal cell wall peptidoglycans.. Functionally, lyses staphylococcal cells by hydrolyzing the polyglycine interpeptide bridges of the peptidoglycan. The protein is Lysostaphin (lss) of Staphylococcus simulans.